Here is a 187-residue protein sequence, read N- to C-terminus: Elongation factor P (187 aa).

It belongs to the elongation factor P family.

Its subcellular location is the cytoplasm. Its pathway is protein biosynthesis; polypeptide chain elongation. Its function is as follows. Involved in peptide bond synthesis. Stimulates efficient translation and peptide-bond synthesis on native or reconstituted 70S ribosomes in vitro. Probably functions indirectly by altering the affinity of the ribosome for aminoacyl-tRNA, thus increasing their reactivity as acceptors for peptidyl transferase. In Synechococcus sp. (strain CC9311), this protein is Elongation factor P.